The sequence spans 466 residues: ATP synthase subunit beta (466 aa).

Position 155-162 (155-162 (GGAGVGKT)) interacts with ATP.

The protein belongs to the ATPase alpha/beta chains family. F-type ATPases have 2 components, CF(1) - the catalytic core - and CF(0) - the membrane proton channel. CF(1) has five subunits: alpha(3), beta(3), gamma(1), delta(1), epsilon(1). CF(0) has three main subunits: a(1), b(2) and c(9-12). The alpha and beta chains form an alternating ring which encloses part of the gamma chain. CF(1) is attached to CF(0) by a central stalk formed by the gamma and epsilon chains, while a peripheral stalk is formed by the delta and b chains.

The protein resides in the cell inner membrane. The catalysed reaction is ATP + H2O + 4 H(+)(in) = ADP + phosphate + 5 H(+)(out). Its function is as follows. Produces ATP from ADP in the presence of a proton gradient across the membrane. The catalytic sites are hosted primarily by the beta subunits. The sequence is that of ATP synthase subunit beta from Bordetella pertussis (strain Tohama I / ATCC BAA-589 / NCTC 13251).